Here is a 294-residue protein sequence, read N- to C-terminus: Acetyl-coenzyme A carboxylase carboxyl transferase subunit beta (294 aa).

The CoA carboxyltransferase N-terminal domain maps to 29–294; sequence LWEKCPECGQ…TQEVKLQTNA (266 aa). Zn(2+)-binding residues include Cys-33, Cys-36, Cys-52, and Cys-55. The C4-type zinc-finger motif lies at 33-55; it reads CPECGQVVYRKDLIDNCSVCSNC.

The protein belongs to the AccD/PCCB family. Acetyl-CoA carboxylase is a heterohexamer composed of biotin carboxyl carrier protein (AccB), biotin carboxylase (AccC) and two subunits each of ACCase subunit alpha (AccA) and ACCase subunit beta (AccD). It depends on Zn(2+) as a cofactor.

It localises to the cytoplasm. The enzyme catalyses N(6)-carboxybiotinyl-L-lysyl-[protein] + acetyl-CoA = N(6)-biotinyl-L-lysyl-[protein] + malonyl-CoA. The protein operates within lipid metabolism; malonyl-CoA biosynthesis; malonyl-CoA from acetyl-CoA: step 1/1. Functionally, component of the acetyl coenzyme A carboxylase (ACC) complex. Biotin carboxylase (BC) catalyzes the carboxylation of biotin on its carrier protein (BCCP) and then the CO(2) group is transferred by the transcarboxylase to acetyl-CoA to form malonyl-CoA. The sequence is that of Acetyl-coenzyme A carboxylase carboxyl transferase subunit beta from Prochlorococcus marinus (strain NATL1A).